The following is a 409-amino-acid chain: Arginine deiminase (409 aa).

C399 (amidino-cysteine intermediate) is an active-site residue.

This sequence belongs to the arginine deiminase family.

It is found in the cytoplasm. The catalysed reaction is L-arginine + H2O = L-citrulline + NH4(+). It participates in amino-acid degradation; L-arginine degradation via ADI pathway; carbamoyl phosphate from L-arginine: step 1/2. This is Arginine deiminase (arcA) from Borreliella afzelii (Borrelia afzelii).